We begin with the raw amino-acid sequence, 199 residues long: MSMELDQSLDAIIASKPKGGIRKRRARSNKPKPTKNAKPAVNTASALKSVISEESKIIVSNLPTDVTEAQVKELFVKSIGPCKRVSLAYGPNGRSKGIATIIFSRPGDATRAYEQYEGRLVDGTRKMKVEIILDPSRQLNSLAARVSPASNASATASKNGAKSSKRKTTRRRRTPNRPKKSAEELDKEMDDYFGSNEKE.

Residues 1–41 form a disordered region; it reads MSMELDQSLDAIIASKPKGGIRKRRARSNKPKPTKNAKPAV. The span at 19 to 35 shows a compositional bias: basic residues; that stretch reads GGIRKRRARSNKPKPTK. Positions 55 to 134 constitute an RRM domain; the sequence is SKIIVSNLPT…RKMKVEIILD (80 aa). A disordered region spans residues 144 to 199; it reads ARVSPASNASATASKNGAKSSKRKTTRRRRTPNRPKKSAEELDKEMDDYFGSNEKE. A compositionally biased stretch (polar residues) spans 148-161; it reads PASNASATASKNGA. The span at 163-179 shows a compositional bias: basic residues; that stretch reads SSKRKTTRRRRTPNRPK.

Interacts with rpn15/dss1, mex67 and uap56.

Its subcellular location is the nucleus. Functionally, has a role in the mRNA export process. Interferes with mitotic chromosome segregation when overexpressed. The protein is mRNA export protein mlo3 (mlo3) of Schizosaccharomyces pombe (strain 972 / ATCC 24843) (Fission yeast).